The following is a 268-amino-acid chain: Zinc transporter ZupT (268 aa).

The next 5 helical transmembrane spans lie at 6–26 (LAFL…LIAF), 37–57 (SFAL…DIFF), 70–90 (TQGY…IGFI), 125–145 (GLFT…ATFV), and 152–172 (SIGL…GIAV). Fe(2+) is bound by residues asparagine 136 and glutamate 139. The Zn(2+) site is built by glutamate 139 and histidine 164. 3 residues coordinate Fe(2+): asparagine 165, glutamate 168, and glutamate 197. Residue glutamate 168 participates in Zn(2+) binding. 2 helical membrane passes run 201–221 (AIVA…GIIF) and 248–268 (MSMY…LLLA).

This sequence belongs to the ZIP transporter (TC 2.A.5) family. ZupT subfamily.

It localises to the cell membrane. It carries out the reaction Zn(2+)(in) = Zn(2+)(out). Mediates zinc uptake. May also transport other divalent cations. This is Zinc transporter ZupT from Oceanobacillus iheyensis (strain DSM 14371 / CIP 107618 / JCM 11309 / KCTC 3954 / HTE831).